A 630-amino-acid chain; its full sequence is ATP synthase subunit alpha (630 aa).

173–180 contacts ATP; that stretch reads GDRQTGKT. A disordered region spans residues 592–630; the sequence is AGGASTAADEDGAGDDEEEAPAPKAKSKNAKSASKAKEK. Residues 599–611 show a composition bias toward acidic residues; it reads ADEDGAGDDEEEA.

The protein belongs to the ATPase alpha/beta chains family. As to quaternary structure, F-type ATPases have 2 components, CF(1) - the catalytic core - and CF(0) - the membrane proton channel. CF(1) has five subunits: alpha(3), beta(3), gamma(1), delta(1), epsilon(1). CF(0) has three main subunits: a(1), b(2) and c(9-12). The alpha and beta chains form an alternating ring which encloses part of the gamma chain. CF(1) is attached to CF(0) by a central stalk formed by the gamma and epsilon chains, while a peripheral stalk is formed by the delta and b chains.

It is found in the cell inner membrane. It catalyses the reaction ATP + H2O + 4 H(+)(in) = ADP + phosphate + 5 H(+)(out). In terms of biological role, produces ATP from ADP in the presence of a proton gradient across the membrane. The alpha chain is a regulatory subunit. The polypeptide is ATP synthase subunit alpha (Sorangium cellulosum (strain So ce56) (Polyangium cellulosum (strain So ce56))).